Here is a 230-residue protein sequence, read N- to C-terminus: UPF0494 membrane protein PB2B2.14c (230 aa).

Transmembrane regions (helical) follow at residues Trp-78–Val-98, Ile-120–Tyr-140, and Ala-148–Val-168.

Belongs to the UPF0494 family.

The protein resides in the membrane. The polypeptide is UPF0494 membrane protein PB2B2.14c (Schizosaccharomyces pombe (strain 972 / ATCC 24843) (Fission yeast)).